The chain runs to 354 residues: UPF0283 membrane protein HI_0043 (354 aa).

The next 3 membrane-spanning stretches (helical) occupy residues 57-77 (LLKF…VQWI), 87-107 (IYLA…KEII), and 211-231 (ESAV…FIAW).

Belongs to the UPF0283 family.

The protein localises to the cell inner membrane. This Haemophilus influenzae (strain ATCC 51907 / DSM 11121 / KW20 / Rd) protein is UPF0283 membrane protein HI_0043.